Here is a 374-residue protein sequence, read N- to C-terminus: Alanine racemase (374 aa).

K34 acts as the Proton acceptor; specific for D-alanine in catalysis. At K34 the chain carries N6-(pyridoxal phosphate)lysine. A substrate-binding site is contributed by R138. The active-site Proton acceptor; specific for L-alanine is the Y265. M313 lines the substrate pocket.

Belongs to the alanine racemase family. Pyridoxal 5'-phosphate serves as cofactor.

The enzyme catalyses L-alanine = D-alanine. The protein operates within amino-acid biosynthesis; D-alanine biosynthesis; D-alanine from L-alanine: step 1/1. In terms of biological role, catalyzes the interconversion of L-alanine and D-alanine. May also act on other amino acids. In Hahella chejuensis (strain KCTC 2396), this protein is Alanine racemase (alr).